A 164-amino-acid chain; its full sequence is RNA pyrophosphohydrolase (164 aa).

In terms of domain architecture, Nudix hydrolase spans 12-158 (RYRQCAGVML…KREVYRAVVK (147 aa)). The Nudix box signature appears at 47 to 68 (GGIDPGETQQEAAMRELEEETG).

It belongs to the Nudix hydrolase family. RppH subfamily. The cofactor is a divalent metal cation.

Accelerates the degradation of transcripts by removing pyrophosphate from the 5'-end of triphosphorylated RNA, leading to a more labile monophosphorylated state that can stimulate subsequent ribonuclease cleavage. The protein is RNA pyrophosphohydrolase of Erythrobacter litoralis (strain HTCC2594).